Reading from the N-terminus, the 226-residue chain is Exosome complex component Rrp4 (226 aa).

Positions 61–135 constitute an S1 motif domain; that stretch reads NDLVIGKVNS…RDPLVSISDR (75 aa). Residues 141 to 200 form the KH domain; it reads DSGVLMEISPSKVPRLIGKKGSMIQMIEEATDAAVTIGQNGWVVVSCESPEGLLKAKKAI.

It belongs to the RRP4 family. Component of the archaeal exosome complex. Forms a trimer of Rrp4 and/or Csl4 subunits. The trimer associates with a hexameric ring-like arrangement composed of 3 Rrp41-Rrp42 heterodimers.

Its subcellular location is the cytoplasm. In terms of biological role, non-catalytic component of the exosome, which is a complex involved in RNA degradation. Increases the RNA binding and the efficiency of RNA degradation. Confers strong poly(A) specificity to the exosome. This Nitrosopumilus maritimus (strain SCM1) protein is Exosome complex component Rrp4.